The chain runs to 37 residues: Large ribosomal subunit protein bL36c (37 aa).

This sequence belongs to the bacterial ribosomal protein bL36 family.

It is found in the plastid. The protein resides in the chloroplast. This Dioscorea elephantipes (Elephant's foot yam) protein is Large ribosomal subunit protein bL36c.